We begin with the raw amino-acid sequence, 204 residues long: B9 domain-containing protein 1 (204 aa).

One can recognise a C2 B9-type domain in the interval 9–127; the sequence is FLLMITGQVE…TIPMFVPEST (119 aa).

Belongs to the B9D family. As to quaternary structure, part of the tectonic-like complex (also named B9 complex).

Its subcellular location is the cytoplasm. It is found in the cytoskeleton. The protein localises to the cilium basal body. Component of the tectonic-like complex, a complex localized at the transition zone of primary cilia and acting as a barrier that prevents diffusion of transmembrane proteins between the cilia and plasma membranes. Required for ciliogenesis and sonic hedgehog/SHH signaling. This is B9 domain-containing protein 1 (B9d1) from Mus musculus (Mouse).